The following is a 749-amino-acid chain: Probable galactinol--sucrose galactosyltransferase 6 (749 aa).

It belongs to the glycosyl hydrolases 36 family.

The enzyme catalyses alpha-D-galactosyl-(1-&gt;3)-1D-myo-inositol + sucrose = raffinose + myo-inositol. In terms of biological role, transglycosidase operating by a ping-pong reaction mechanism. Involved in the synthesis of raffinose, a major soluble carbohydrate in seeds, roots and tubers. This Arabidopsis thaliana (Mouse-ear cress) protein is Probable galactinol--sucrose galactosyltransferase 6 (RFS6).